A 514-amino-acid chain; its full sequence is 23S rRNA (uracil(1939)-C(5))-methyltransferase RlmD (514 aa).

Residues C70, C76, C79, and C158 each coordinate [4Fe-4S] cluster. Q272, F301, N306, E322, N350, and D371 together coordinate S-adenosyl-L-methionine. Residue C398 is the Nucleophile of the active site.

Belongs to the class I-like SAM-binding methyltransferase superfamily. RNA M5U methyltransferase family. RlmD subfamily.

The enzyme catalyses uridine(1939) in 23S rRNA + S-adenosyl-L-methionine = 5-methyluridine(1939) in 23S rRNA + S-adenosyl-L-homocysteine + H(+). In terms of biological role, catalyzes the formation of 5-methyl-uridine at position 1939 (m5U1939) in 23S rRNA. The protein is 23S rRNA (uracil(1939)-C(5))-methyltransferase RlmD of Chromobacterium violaceum (strain ATCC 12472 / DSM 30191 / JCM 1249 / CCUG 213 / NBRC 12614 / NCIMB 9131 / NCTC 9757 / MK).